The sequence spans 289 residues: MTSSVLTPSLKLLAMTNSSSSTLFCIPSIFNISSSESHRFNFSLSSRPVNLTLSLKSKTLRNSSPVVTFVSQTSNWAEEEEGEDGSIGGTSVTVDESFESEDGVGFPEPPEEAKLFVGNLPYDVDSQALAMLFEQAGTVEISEVIYNRDTDQSRGFGFVTMSTVEEAEKAVEKFNSFEVNGRRLTVNRAAPRGSRPERQPRVYDAAFRIYVGNLPWDVDSGRLERLFSEHGKVVDARVVSDRETGRSRGFGFVQMSNENEVNVAIAALDGQNLEGRAIKVNVAEERTRR.

Residues 1–71 constitute a chloroplast transit peptide; it reads MTSSVLTPSL…NSSPVVTFVS (71 aa). RRM domains are found at residues 113–191 and 207–285; these read AKLF…RAAP and FRIY…VAEE.

ADP-ribosylated by the Pseudomonas syringae type III effector HopU1. ADP-ribosylation reduces the ability of the protein to bind RNA.

The protein resides in the plastid. It is found in the chloroplast. In terms of biological role, required for specific RNA editing events in chloroplasts and stabilizes specific chloroplast mRNAs. This chain is RNA-binding protein CP31B, chloroplastic, found in Arabidopsis thaliana (Mouse-ear cress).